The chain runs to 449 residues: Tubulin beta-7 chain (449 aa).

Positions 11, 69, 138, 142, 143, 144, 204, and 226 each coordinate GTP. Glutamate 69 is a binding site for Mg(2+). The disordered stretch occupies residues 422 to 449 (YQQYQDATADEEGEYEEEEAEYEQEETY). Over residues 429-449 (TADEEGEYEEEEAEYEQEETY) the composition is skewed to acidic residues.

The protein belongs to the tubulin family. In terms of assembly, dimer of alpha and beta chains. A typical microtubule is a hollow water-filled tube with an outer diameter of 25 nm and an inner diameter of 15 nM. Alpha-beta heterodimers associate head-to-tail to form protofilaments running lengthwise along the microtubule wall with the beta-tubulin subunit facing the microtubule plus end conferring a structural polarity. Microtubules usually have 13 protofilaments but different protofilament numbers can be found in some organisms and specialized cells. It depends on Mg(2+) as a cofactor.

It is found in the cytoplasm. The protein localises to the cytoskeleton. Its function is as follows. Tubulin is the major constituent of microtubules, a cylinder consisting of laterally associated linear protofilaments composed of alpha- and beta-tubulin heterodimers. Microtubules grow by the addition of GTP-tubulin dimers to the microtubule end, where a stabilizing cap forms. Below the cap, tubulin dimers are in GDP-bound state, owing to GTPase activity of alpha-tubulin. The polypeptide is Tubulin beta-7 chain (TUBB7) (Arabidopsis thaliana (Mouse-ear cress)).